A 593-amino-acid chain; its full sequence is Zinc metalloproteinase-disintegrin-like atrase-B (593 aa).

An N-terminal signal peptide occupies residues 1-20 (MIQALLVIICLAVFPHQGSS). The propeptide occupies 21–191 (IILESGNVND…DESIEKTSQL (171 aa)). The Peptidase M12B domain maps to 205–400 (KYIEFYVIVD…DRPQCILNKP (196 aa)). Ca(2+) is bound by residues Glu-208 and Asp-292. 3 disulfides stabilise this stretch: Cys-316-Cys-395, Cys-356-Cys-379, and Cys-358-Cys-363. Asn-319 carries N-linked (GlcNAc...) asparagine glycosylation. His-341 contacts Zn(2+). The active site involves Glu-342. Residues His-345 and His-351 each coordinate Zn(2+). Cys-395, Asn-398, Ile-410, Asn-413, Phe-415, Glu-417, Glu-420, and Asp-423 together coordinate Ca(2+). Residues 408–477 (PPICGNYFVE…ECPTDSLQRN (70 aa)) enclose the Disintegrin domain. 11 disulfide bridges follow: Cys-422/Cys-435, Cys-424/Cys-430, Cys-434/Cys-440, Cys-449/Cys-469, Cys-456/Cys-488, Cys-481/Cys-493, Cys-500/Cys-550, Cys-515/Cys-558, Cys-528/Cys-538, Cys-545/Cys-581, and Cys-575/Cys-586. Positions 455–457 (DCD) match the D/ECD-tripeptide motif. Ca(2+)-binding residues include Asp-457, Leu-458, Glu-460, and Asp-472. Residue Asn-490 is glycosylated (N-linked (GlcNAc...) asparagine).

Belongs to the venom metalloproteinase (M12B) family. P-III subfamily. P-IIIa sub-subfamily. As to quaternary structure, monomer. Zn(2+) is required as a cofactor. Expressed by the venom gland.

The protein resides in the secreted. Inhibited by EDTA, EGTA, 1,10-phenanthroline and DTT. Not inhibited by PMSF and SBTI. Its function is as follows. Snake venom zinc protease that inhibits the classical and alternative pathways of complement by cleaving factor B, C6, C7, and C8. Also slowly and selectively degrades alpha-chain of fibrinogen (FGA), and shows edema-inducing activity. The protein is Zinc metalloproteinase-disintegrin-like atrase-B of Naja atra (Chinese cobra).